A 259-amino-acid chain; its full sequence is Potassium/proton antiporter CemA (259 aa).

4 helical membrane-spanning segments follow: residues 47 to 67 (CLLV…EPWV), 136 to 156 (IITH…YLVM), 184 to 204 (ILLA…ELLI), and 219 to 239 (IISS…KYWI).

This sequence belongs to the CemA family.

Its subcellular location is the plastid. It is found in the chloroplast inner membrane. It catalyses the reaction K(+)(in) + H(+)(out) = K(+)(out) + H(+)(in). Its function is as follows. Contributes to K(+)/H(+) antiport activity by supporting proton efflux to control proton extrusion and homeostasis in chloroplasts in a light-dependent manner to modulate photosynthesis. Prevents excessive induction of non-photochemical quenching (NPQ) under continuous-light conditions. Indirectly promotes efficient inorganic carbon uptake into chloroplasts. The sequence is that of Potassium/proton antiporter CemA from Welwitschia mirabilis (Tree tumbo).